Here is a 545-residue protein sequence, read N- to C-terminus: CTP synthase (545 aa).

An amidoligase domain region spans residues 1 to 265 (MTKYIFITGG…DEIVVKKLSL (265 aa)). CTP is bound at residue Ser-13. Ser-13 provides a ligand contact to UTP. ATP-binding positions include 14 to 19 (SLGKGI) and Asp-71. Residues Asp-71 and Glu-139 each contribute to the Mg(2+) site. CTP is bound by residues 146–148 (DIE), 186–191 (KTKPTQ), and Lys-222. Residues 186–191 (KTKPTQ) and Lys-222 contribute to the UTP site. A Glutamine amidotransferase type-1 domain is found at 290–541 (KIAMVGKYTE…VFAARIHHQE (252 aa)). An L-glutamine-binding site is contributed by Gly-351. The Nucleophile; for glutamine hydrolysis role is filled by Cys-378. Residues 379 to 382 (LGMQ), Glu-402, and Arg-469 each bind L-glutamine. Active-site residues include His-514 and Glu-516.

Belongs to the CTP synthase family. Homotetramer.

It carries out the reaction UTP + L-glutamine + ATP + H2O = CTP + L-glutamate + ADP + phosphate + 2 H(+). The enzyme catalyses L-glutamine + H2O = L-glutamate + NH4(+). It catalyses the reaction UTP + NH4(+) + ATP = CTP + ADP + phosphate + 2 H(+). It participates in pyrimidine metabolism; CTP biosynthesis via de novo pathway; CTP from UDP: step 2/2. Allosterically activated by GTP, when glutamine is the substrate; GTP has no effect on the reaction when ammonia is the substrate. The allosteric effector GTP functions by stabilizing the protein conformation that binds the tetrahedral intermediate(s) formed during glutamine hydrolysis. Inhibited by the product CTP, via allosteric rather than competitive inhibition. Catalyzes the ATP-dependent amination of UTP to CTP with either L-glutamine or ammonia as the source of nitrogen. Regulates intracellular CTP levels through interactions with the four ribonucleotide triphosphates. This is CTP synthase from Legionella pneumophila (strain Lens).